We begin with the raw amino-acid sequence, 1972 residues long: Myosin-11 (1972 aa).

Phosphoserine occurs at positions 8, 23, and 40. The region spanning 31–81 (VAKKLVWVPSEKQGFEAASIKEEKGDEVVVELVENGKKVTVGKDDIQKMNP) is the Myosin N-terminal SH3-like domain. Residues 85 to 783 (SKVEDMAELT…VLAHLEEERD (699 aa)) form the Myosin motor domain. Position 129 is an N6,N6,N6-trimethyllysine (K129). 178–185 (GESGAGKT) is a binding site for ATP. Actin-binding regions lie at residues 661–683 (LGKL…IPNH) and 762–776 (RIGQ…GVLA). Residues 786-815 (ITDVIMAFQAMCRGYLARKAFTKRQQQLTA) form the IQ domain. A coiled-coil region spans residues 844 to 1934 (LLQVTRQEEE…KSKLRRGNEA (1091 aa)). A Phosphothreonine modification is found at T1177. Residues S1684 and S1722 each carry the phosphoserine modification. Polar residues predominate over residues 1771 to 1788 (NELATERSTAQKNESARQ). 2 disordered regions span residues 1771–1797 (NELA…NKEL) and 1867–1972 (QYKE…KASE). Basic and acidic residues predominate over residues 1867-1876 (QYKEQAEKGN). The C-terminal stretch occupies residues 1935–1972 (SFVPSRRAGGRRVIENTDGSEEEMDARDSDFNGTKASE). Residue T1951 is modified to Phosphothreonine. Phosphoserine is present on residues S1954 and S1971.

The protein belongs to the TRAFAC class myosin-kinesin ATPase superfamily. Myosin family. As to quaternary structure, muscle myosin is a hexameric protein that consists of 2 heavy chain subunits (MHC), 2 alkali light chain subunits (MLC) and 2 regulatory light chain subunits (MLC-2).

It is found in the melanosome. It localises to the cytoplasm. Its subcellular location is the myofibril. Muscle contraction. This chain is Myosin-11 (Myh11), found in Mus musculus (Mouse).